The primary structure comprises 486 residues: Ribulose bisphosphate carboxylase large chain (486 aa).

The propeptide occupies 1 to 2 (MS). Substrate contacts are provided by Asn-123 and Thr-173. Residue Lys-175 is the Proton acceptor of the active site. Lys-177 lines the substrate pocket. Lys-201, Asp-203, and Glu-204 together coordinate Mg(2+). Position 201 is an N6-carboxylysine (Lys-201). Ser-208 is modified (phosphoserine). His-294 (proton acceptor) is an active-site residue. The substrate site is built by Arg-295 and His-327. Thr-330 carries the post-translational modification Phosphothreonine. Ser-379 lines the substrate pocket.

This sequence belongs to the RuBisCO large chain family. Type I subfamily. Heterohexadecamer of 8 large chains and 8 small chains; disulfide-linked. The disulfide link is formed within the large subunit homodimers. Mg(2+) serves as cofactor. Post-translationally, the disulfide bond which can form in the large chain dimeric partners within the hexadecamer appears to be associated with oxidative stress and protein turnover.

Its subcellular location is the plastid. It is found in the chloroplast. It carries out the reaction 2 (2R)-3-phosphoglycerate + 2 H(+) = D-ribulose 1,5-bisphosphate + CO2 + H2O. The enzyme catalyses D-ribulose 1,5-bisphosphate + O2 = 2-phosphoglycolate + (2R)-3-phosphoglycerate + 2 H(+). Functionally, ruBisCO catalyzes two reactions: the carboxylation of D-ribulose 1,5-bisphosphate, the primary event in carbon dioxide fixation, as well as the oxidative fragmentation of the pentose substrate in the photorespiration process. Both reactions occur simultaneously and in competition at the same active site. The chain is Ribulose bisphosphate carboxylase large chain from Aethionema grandiflorum (Persian stone-cress).